The following is a 371-amino-acid chain: Mitogen-activated protein kinase homolog MMK2 (371 aa).

Residues valine 37–methionine 323 form the Protein kinase domain. ATP contacts are provided by residues valine 43–valine 51 and lysine 66. The Proton acceptor role is filled by aspartate 163. Residue threonine 195 is modified to Phosphothreonine. Positions threonine 195–tyrosine 197 match the TXY motif. Tyrosine 197 carries the phosphotyrosine modification.

Belongs to the protein kinase superfamily. CMGC Ser/Thr protein kinase family. MAP kinase subfamily. The cofactor is Mg(2+). Post-translationally, dually phosphorylated on Thr-195 and Tyr-197, which activates the enzyme. Autophosphorylated.

It carries out the reaction L-seryl-[protein] + ATP = O-phospho-L-seryl-[protein] + ADP + H(+). It catalyses the reaction L-threonyl-[protein] + ATP = O-phospho-L-threonyl-[protein] + ADP + H(+). Its activity is regulated as follows. Activated by tyrosine and threonine phosphorylation. The sequence is that of Mitogen-activated protein kinase homolog MMK2 (MMK2) from Medicago sativa (Alfalfa).